The sequence spans 1561 residues: Sterile alpha motif domain-containing protein 9-like (1561 aa).

One can recognise an SAM domain in the interval 14–79; that stretch reads WTKEHVRKWV…RMYNKLISSP (66 aa). Positions 78-157 are disordered; sequence SPESHNQDSR…DNKPKPEQMS (80 aa). Basic and acidic residues-rich tracts occupy residues 82 to 107 and 142 to 153; these read HNQD…KNEE and VTKDMEDNKPKP.

As to quaternary structure, interacts with EEA1.

Its subcellular location is the early endosome. The protein resides in the mitochondrion. Its function is as follows. May be involved in endosome fusion. Mediates down-regulation of growth factor signaling via internalization of growth factor receptors. In Mus musculus (Mouse), this protein is Sterile alpha motif domain-containing protein 9-like (Samd9l).